The sequence spans 103 residues: Nucleoid-associated protein Adeh_3636 (103 aa).

The protein belongs to the YbaB/EbfC family. In terms of assembly, homodimer.

Its subcellular location is the cytoplasm. It is found in the nucleoid. In terms of biological role, binds to DNA and alters its conformation. May be involved in regulation of gene expression, nucleoid organization and DNA protection. This is Nucleoid-associated protein Adeh_3636 from Anaeromyxobacter dehalogenans (strain 2CP-C).